Reading from the N-terminus, the 376-residue chain is Alpha-ketoglutarate-dependent dioxygenase esdpJ (376 aa).

Fe cation-binding residues include H145 and D147. Position 202 (T202) interacts with 2-oxoglutarate. The interval 234–260 (YNQSSQEKKSEIHVEPRGSPNNVGSDL) is disordered. Basic and acidic residues predominate over residues 239 to 249 (QEKKSEIHVEP). H335 lines the Fe cation pocket. The 2-oxoglutarate site is built by R347 and R351. The disordered stretch occupies residues 354-376 (GVGEQPYLDPESKTRREALGEFN). Basic and acidic residues predominate over residues 363-376 (PESKTRREALGEFN).

The protein belongs to the TfdA dioxygenase family. Fe(2+) is required as a cofactor.

Its function is as follows. Alpha-ketoglutarate-dependent dioxygenas; part of the cluster that mediates the biosynthesis of shearones, diterpenoid pyrones (DPs) which are structurally diverse meroterpenoids consisting of a diterpene linked by a pyrone, and which may exhibit a range of bioactivities. The alpha-ketoglutarate-dependent dioxygenase esdpJ seems not to be involved in this pathway. The molecular scaffold is commonly biosynthesized by a series of enzymes including the non-reducing polyketide synthase (NR-PKS) esdpA that generates an alpha-pyrone; the prenyltransferase esdpC that attaches a geranylgeranyl pyrophosphate (GGPP) produced by the GGPP synthase (GGPPS) esdpD onto the pyrone unit; the FAD-dependent monooxygenase esdpE that converts an olefin on the diterpene unit into an epoxide; and the terpene cyclase esdpB that catalyzes the cyclization reactions to give the molecular backbone shearone A. In the modification steps, esdpF oxidizes the hydroxy group to a ketone at C-3 and esdpG then attaches hydroxy groups at both C-11 and C-12. After that, esdpI hydroxylates at C-20 and esdpH hydroxylates at C-6'. The ether bridge is generated by nucleophilic attack of the hydroxy group at C-20 to the carbonyl carbon at C-3. EsdpH can also functions prior to esdpI. The different combinations of these modification enzymes lead to the production of diverse shearone derivatives, shearone I being the end product of the pathway. The protein is Alpha-ketoglutarate-dependent dioxygenase esdpJ of Penicillium shearii (Eupenicillium shearii).